We begin with the raw amino-acid sequence, 568 residues long: Putative ABC transporter ATP-binding protein CPE1583 (568 aa).

ABC transporter domains follow at residues 7–248 and 303–536; these read IEFK…GIRE and LEFK…ASLK. Residues 41 to 48 and 336 to 343 contribute to the ATP site; these read GPSGSGKS and GKNGAGKS.

This sequence belongs to the ABC transporter superfamily.

It is found in the cell membrane. Probably part of an ABC transporter complex. Responsible for energy coupling to the transport system. The sequence is that of Putative ABC transporter ATP-binding protein CPE1583 from Clostridium perfringens (strain 13 / Type A).